Consider the following 190-residue polypeptide: Threonylcarbamoyl-AMP synthase (190 aa).

The YrdC-like domain maps to 7–190; that stretch reads TGSSAAVVDL…ALTGELFRQG (184 aa).

It belongs to the SUA5 family. TsaC subfamily.

It is found in the cytoplasm. It carries out the reaction L-threonine + hydrogencarbonate + ATP = L-threonylcarbamoyladenylate + diphosphate + H2O. Its function is as follows. Required for the formation of a threonylcarbamoyl group on adenosine at position 37 (t(6)A37) in tRNAs that read codons beginning with adenine. Catalyzes the conversion of L-threonine, HCO(3)(-)/CO(2) and ATP to give threonylcarbamoyl-AMP (TC-AMP) as the acyladenylate intermediate, with the release of diphosphate. The sequence is that of Threonylcarbamoyl-AMP synthase from Salmonella typhi.